The chain runs to 326 residues: 4-hydroxythreonine-4-phosphate dehydrogenase (326 aa).

Substrate is bound by residues His-130 and Thr-131. Residues His-160, His-205, and His-260 each coordinate a divalent metal cation. Substrate-binding residues include Lys-268, Asn-277, and Arg-286.

It belongs to the PdxA family. Homodimer. Requires Zn(2+) as cofactor. It depends on Mg(2+) as a cofactor. Co(2+) serves as cofactor.

It is found in the cytoplasm. It carries out the reaction 4-(phosphooxy)-L-threonine + NAD(+) = 3-amino-2-oxopropyl phosphate + CO2 + NADH. Its pathway is cofactor biosynthesis; pyridoxine 5'-phosphate biosynthesis; pyridoxine 5'-phosphate from D-erythrose 4-phosphate: step 4/5. In terms of biological role, catalyzes the NAD(P)-dependent oxidation of 4-(phosphooxy)-L-threonine (HTP) into 2-amino-3-oxo-4-(phosphooxy)butyric acid which spontaneously decarboxylates to form 3-amino-2-oxopropyl phosphate (AHAP). The protein is 4-hydroxythreonine-4-phosphate dehydrogenase of Aromatoleum aromaticum (strain DSM 19018 / LMG 30748 / EbN1) (Azoarcus sp. (strain EbN1)).